A 486-amino-acid chain; its full sequence is Homoserine O-acetyltransferase (486 aa).

The region spanning 66-436 (NVLVICHALT…PEGHDAFLLE (371 aa)) is the AB hydrolase-1 domain. Serine 162 functions as the Nucleophile in the catalytic mechanism. The interval 248-281 (KFSRRSPSIAQQQKAQREETRKPSTVSEHSLQIH) is disordered. Polar residues-rich tracts occupy residues 250–261 (SRRSPSIAQQQK) and 270–280 (PSTVSEHSLQI). Catalysis depends on residues aspartate 401 and histidine 430.

It belongs to the AB hydrolase superfamily. MetX family.

It localises to the cytoplasm. It carries out the reaction L-homoserine + acetyl-CoA = O-acetyl-L-homoserine + CoA. Its pathway is amino-acid biosynthesis; L-methionine biosynthesis via de novo pathway; O-acetyl-L-homoserine from L-homoserine: step 1/1. Commits homoserine to the methionine biosynthesis pathway by catalyzing its O-acetylation. The sequence is that of Homoserine O-acetyltransferase (MET2) from Saccharomyces cerevisiae (strain ATCC 204508 / S288c) (Baker's yeast).